Consider the following 553-residue polypeptide: Solute carrier family 45 member 3 (553 aa).

11 consecutive transmembrane segments (helical) span residues 19–39, 52–72, 88–108, 120–140, 161–181, 198–218, 275–295, 323–343, 353–373, 382–402, and 522–542; these read LLVN…ITYV, FMTM…PLLG, FIWA…RAGW, LELA…QVCF, FSVY…LPAI, CLFG…LFVT, FVAE…YTDF, MGSL…LVMD, SVYL…CLSH, AALT…LASL, and AYMV…TQVV.

It belongs to the glycoside-pentoside-hexuronide (GPH) cation symporter transporter (TC 2.A.2) family. As to expression, expressed in the epididymis. Primarily expressed in the prostate, but also in other tissues.

Its subcellular location is the membrane. It catalyses the reaction sucrose(out) + H(+)(out) = sucrose(in) + H(+)(in). Functionally, proton-associated sucrose transporter. May be able to transport also glucose and fructose. This chain is Solute carrier family 45 member 3 (Slc45a3), found in Mus musculus (Mouse).